Consider the following 237-residue polypeptide: UDP-2,3-diacylglucosamine hydrolase (237 aa).

Positions 9, 11, 42, 80, and 115 each coordinate Mn(2+). N80–R81 contributes to the substrate binding site. D123, S161, K165, K168, and H196 together coordinate substrate. Positions 196 and 198 each coordinate Mn(2+).

It belongs to the LpxH family. The cofactor is Mn(2+).

The protein resides in the cell inner membrane. It catalyses the reaction UDP-2-N,3-O-bis[(3R)-3-hydroxytetradecanoyl]-alpha-D-glucosamine + H2O = 2-N,3-O-bis[(3R)-3-hydroxytetradecanoyl]-alpha-D-glucosaminyl 1-phosphate + UMP + 2 H(+). The protein operates within glycolipid biosynthesis; lipid IV(A) biosynthesis; lipid IV(A) from (3R)-3-hydroxytetradecanoyl-[acyl-carrier-protein] and UDP-N-acetyl-alpha-D-glucosamine: step 4/6. Hydrolyzes the pyrophosphate bond of UDP-2,3-diacylglucosamine to yield 2,3-diacylglucosamine 1-phosphate (lipid X) and UMP by catalyzing the attack of water at the alpha-P atom. Involved in the biosynthesis of lipid A, a phosphorylated glycolipid that anchors the lipopolysaccharide to the outer membrane of the cell. The chain is UDP-2,3-diacylglucosamine hydrolase from Haemophilus influenzae (strain PittGG).